Here is a 104-residue protein sequence, read N- to C-terminus: UPF0235 protein Sfri_2863 (104 aa).

The protein belongs to the UPF0235 family.

The sequence is that of UPF0235 protein Sfri_2863 from Shewanella frigidimarina (strain NCIMB 400).